Reading from the N-terminus, the 486-residue chain is Bifunctional protein HldE (486 aa).

The ribokinase stretch occupies residues 1–331; that stretch reads MSTNVADLLH…NALTAESVPV (331 aa). 207–210 is a binding site for ATP; sequence NLGE. Asp276 is an active-site residue. The tract at residues 358–486 is cytidylyltransferase; sequence VTNGCFDLLH…STTKLIEKGH (129 aa).

In the N-terminal section; belongs to the carbohydrate kinase PfkB family. This sequence in the C-terminal section; belongs to the cytidylyltransferase family. In terms of assembly, homodimer.

It catalyses the reaction D-glycero-beta-D-manno-heptose 7-phosphate + ATP = D-glycero-beta-D-manno-heptose 1,7-bisphosphate + ADP + H(+). The catalysed reaction is D-glycero-beta-D-manno-heptose 1-phosphate + ATP + H(+) = ADP-D-glycero-beta-D-manno-heptose + diphosphate. Its pathway is nucleotide-sugar biosynthesis; ADP-L-glycero-beta-D-manno-heptose biosynthesis; ADP-L-glycero-beta-D-manno-heptose from D-glycero-beta-D-manno-heptose 7-phosphate: step 1/4. It functions in the pathway nucleotide-sugar biosynthesis; ADP-L-glycero-beta-D-manno-heptose biosynthesis; ADP-L-glycero-beta-D-manno-heptose from D-glycero-beta-D-manno-heptose 7-phosphate: step 3/4. Its function is as follows. Catalyzes the phosphorylation of D-glycero-D-manno-heptose 7-phosphate at the C-1 position to selectively form D-glycero-beta-D-manno-heptose-1,7-bisphosphate. Catalyzes the ADP transfer from ATP to D-glycero-beta-D-manno-heptose 1-phosphate, yielding ADP-D-glycero-beta-D-manno-heptose. The polypeptide is Bifunctional protein HldE (Koribacter versatilis (strain Ellin345)).